We begin with the raw amino-acid sequence, 254 residues long: NAD kinase (254 aa).

Asp44 acts as the Proton acceptor in catalysis. Residues 44-45 (DG), 114-115 (NE), Asp144, Ala152, 155-160 (TAYNYS), and Ala179 contribute to the NAD(+) site.

The protein belongs to the NAD kinase family. It depends on a divalent metal cation as a cofactor.

The protein localises to the cytoplasm. It catalyses the reaction NAD(+) + ATP = ADP + NADP(+) + H(+). Its function is as follows. Involved in the regulation of the intracellular balance of NAD and NADP, and is a key enzyme in the biosynthesis of NADP. Catalyzes specifically the phosphorylation on 2'-hydroxyl of the adenosine moiety of NAD to yield NADP. In Cereibacter sphaeroides (strain ATCC 17025 / ATH 2.4.3) (Rhodobacter sphaeroides), this protein is NAD kinase.